The sequence spans 281 residues: Shikimate dehydrogenase (NADP(+)) (281 aa).

Residues 20-22 (SRS) and T67 each bind shikimate. K71 (proton acceptor) is an active-site residue. NADP(+) is bound at residue D83. Shikimate is bound by residues N92 and D108. Residues 133-137 (GAGGA), 157-162 (NRTEAR), and M225 each bind NADP(+). Residue Y227 coordinates shikimate. Residue G248 coordinates NADP(+).

Belongs to the shikimate dehydrogenase family. In terms of assembly, homodimer.

The enzyme catalyses shikimate + NADP(+) = 3-dehydroshikimate + NADPH + H(+). It functions in the pathway metabolic intermediate biosynthesis; chorismate biosynthesis; chorismate from D-erythrose 4-phosphate and phosphoenolpyruvate: step 4/7. Involved in the biosynthesis of the chorismate, which leads to the biosynthesis of aromatic amino acids. Catalyzes the reversible NADPH linked reduction of 3-dehydroshikimate (DHSA) to yield shikimate (SA). The sequence is that of Shikimate dehydrogenase (NADP(+)) from Paracidovorax citrulli (strain AAC00-1) (Acidovorax citrulli).